A 239-amino-acid chain; its full sequence is uncharacterized protein (239 aa).

The protein belongs to the initiator RepB protein family.

Its function is as follows. Mutations in ORF 239 affects the incN plasmid pUC1 E.coli polA-independence but not its autonomous replication ability. This is an uncharacterized protein from Escherichia coli.